The following is a 694-amino-acid chain: Elongation factor G (694 aa).

The 276-residue stretch at 10–285 (EKTRNIGIMA…GVVDYLPSPL (276 aa)) folds into the tr-type G domain. GTP is bound by residues 19-26 (AHIDAGKT), 83-87 (DTPGH), and 137-140 (NKMD).

Belongs to the TRAFAC class translation factor GTPase superfamily. Classic translation factor GTPase family. EF-G/EF-2 subfamily.

It localises to the cytoplasm. Its function is as follows. Catalyzes the GTP-dependent ribosomal translocation step during translation elongation. During this step, the ribosome changes from the pre-translocational (PRE) to the post-translocational (POST) state as the newly formed A-site-bound peptidyl-tRNA and P-site-bound deacylated tRNA move to the P and E sites, respectively. Catalyzes the coordinated movement of the two tRNA molecules, the mRNA and conformational changes in the ribosome. This Lactobacillus delbrueckii subsp. bulgaricus (strain ATCC BAA-365 / Lb-18) protein is Elongation factor G.